A 197-amino-acid polypeptide reads, in one-letter code: Ion-translocating oxidoreductase complex subunit B (197 aa).

The interval 1–26 is hydrophobic; the sequence is MSIVIIAVLALSALALTFGAVLGFAS. The 4Fe-4S domain maps to 32 to 90; that stretch reads EGNPIVDQIDGLLPQTQCGQCGYPGCRPYAEAIANGDAINKCPPGGEATITALADLLDV. [4Fe-4S] cluster contacts are provided by C49, C52, C57, C73, C115, C118, C121, C125, C145, C148, C151, and C155. 4Fe-4S ferredoxin-type domains are found at residues 106 to 135 and 136 to 165; these read QVAYIREDECIGCTKCIQACPVDAILGAAK and QMHTVIVSECTGCDLCVEPCPVDCIDMIPA.

It belongs to the 4Fe4S bacterial-type ferredoxin family. RnfB subfamily. The complex is composed of six subunits: RnfA, RnfB, RnfC, RnfD, RnfE and RnfG. It depends on [4Fe-4S] cluster as a cofactor.

It localises to the cell inner membrane. In terms of biological role, part of a membrane-bound complex that couples electron transfer with translocation of ions across the membrane. This chain is Ion-translocating oxidoreductase complex subunit B, found in Hahella chejuensis (strain KCTC 2396).